Here is a 409-residue protein sequence, read N- to C-terminus: AP-1-like transcription factor YAP2 (409 aa).

Short sequence motifs (bipartite nuclear localization signal) lie at residues 17 to 24 (MKKQMLLN) and 47 to 54 (SRRTAQNR). The interval 26 to 64 (DGTPKRKVGRPGRKRIDSEAKSRRTAQNRAAQRAFRDRK) is disordered. A bZIP domain is found at 43–106 (SEAKSRRTAQ…KSLLSEITKY (64 aa)). Residues 46-69 (KSRRTAQNRAAQRAFRDRKEAKMK) form a basic motif region. The tract at residues 71–99 (LQERVELLEQKDAQNKTTTDFLLCSLKSL) is leucine-zipper. Residues 127–156 (QKRENEKGTSTAVSKAAKELPSPNSDENMT) form a disordered region. Residues 356 to 387 (CYHILEEISSLPKYSSLDIDDLCSELIIKAKC) form a c-CRD region. The short motif at 372–379 (LDIDDLCS) is the Nuclear export signal element.

Belongs to the bZIP family. YAP subfamily. In terms of assembly, homodimer; disulfide-linked, upon oxidation. Interacts in the nucleus with the nuclear export protein CRM1. Interacts with RCK1. Depending on the oxidative stress inducing agent, CAD1/YAP2 can undergo two distinct conformational changes, both through oxidation of cysteine residues, and both masking the nuclear export signal, thus abolishing nuclear export by CRM1/exportin 1. Peroxide stress induces the formation of possible intramolecular disulfide bonds as well as intermolcular disulfide within a homodimer. Cadmium may bind directly to specific cysteine residues (Cys-391 and either Cys-356 or Cys-387) in the c-CRD.

It localises to the cytoplasm. The protein resides in the nucleus. Transcription activator involved in oxidative stress response and cadmium resistance. Regulates the transcription of genes overrepresented for the function of stabilizing proteins including the inducible Hsp90-family protein HSP82. Preferentially binds to promoters with the core binding site 5'-TTA[CG]TAA-3'. Activity of the transcription factor is controlled through oxidation of specific cysteine residues resulting in the alteration of its subcellular location. Activation by alkyl hydroperoxides or cadmium induces nuclear accumulation and as a result CAD1/YAP2 transcriptional activity. The chain is AP-1-like transcription factor YAP2 from Saccharomyces cerevisiae (strain ATCC 204508 / S288c) (Baker's yeast).